A 471-amino-acid polypeptide reads, in one-letter code: Delta(24(24(1)))-sterol reductase erg4A (471 aa).

N-linked (GlcNAc...) asparagine glycosylation occurs at Asn-15. The next 8 membrane-spanning stretches (helical) occupy residues 33–53, 89–109, 130–150, 159–179, 216–236, 244–264, 282–302, and 313–333; these read VTLIMIGFPLLMYYMYIGAVL, WTIYWTFLILEGAGYLYLPGV, AVSSWYLTIAAALILHFTGVL, FGPLMSVAICSGIFVSIVAYI, MFFEVRIPWFILFLLTLGTAL, LVAGEVLFLLMAHFLYANACA, GFMLIFWNLAGVPMSYCHCTL, and HWNPWVLAVWAVAYLFMYWVW. NADP(+)-binding positions include Lys-340, Arg-344, Leu-380, and 392–393; that span reads HY. The helical transmembrane segment at 397-417 threads the bilayer; it reads VFFAISWGLITGFNSPFPWFY. NADP(+)-binding positions include Asp-432, 436–440, and Tyr-447; that span reads CRERY.

It belongs to the ERG4/ERG24 family.

The protein resides in the endoplasmic reticulum membrane. It catalyses the reaction ergosterol + NADP(+) = ergosta-5,7,22,24(28)-tetraen-3beta-ol + NADPH + H(+). It functions in the pathway steroid metabolism; ergosterol biosynthesis. Delta(24(24(1)))-sterol reductase; part of the third module of ergosterol biosynthesis pathway that includes the late steps of the pathway. Catalyzes the last step of ergosterol biosynthesis by converting ergosta-5,7,22,24(28)-tetraen-3beta-ol into ergosterol. The third module or late pathway involves the ergosterol synthesis itself through consecutive reactions that mainly occur in the endoplasmic reticulum (ER) membrane. Firstly, the squalene synthase erg9 catalyzes the condensation of 2 farnesyl pyrophosphate moieties to form squalene, which is the precursor of all steroids. Squalene synthase is crucial for balancing the incorporation of farnesyl diphosphate (FPP) into sterol and nonsterol isoprene synthesis. Secondly, squalene is converted into lanosterol by the consecutive action of the squalene epoxidase erg1 and the lanosterol synthase erg7. Then, the delta(24)-sterol C-methyltransferase erg6 methylates lanosterol at C-24 to produce eburicol. Eburicol is the substrate of the sterol 14-alpha demethylase encoded by cyp51A and cyp51B, to yield 4,4,24-trimethyl ergosta-8,14,24(28)-trienol. The C-14 reductase erg24 then reduces the C14=C15 double bond which leads to 4,4-dimethylfecosterol. A sequence of further demethylations at C-4, involving the C-4 demethylation complex containing the C-4 methylsterol oxidases erg25A or erg25B, the sterol-4-alpha-carboxylate 3-dehydrogenase erg26 and the 3-keto-steroid reductase erg27, leads to the production of fecosterol via 4-methylfecosterol. The C-8 sterol isomerase erg2 then catalyzes the reaction which results in unsaturation at C-7 in the B ring of sterols and thus converts fecosterol to episterol. The sterol-C5-desaturase erg3B then catalyzes the introduction of a C-5 double bond in the B ring to produce 5-dehydroepisterol. The 2 other sterol-C5-desaturases, erg3A and erg3C, seem to be less important in ergosterol biosynthesis. The C-22 sterol desaturase erg5 further converts 5-dehydroepisterol into ergosta-5,7,22,24(28)-tetraen-3beta-ol by forming the C-22(23) double bond in the sterol side chain. Finally, ergosta-5,7,22,24(28)-tetraen-3beta-ol is substrate of the C-24(28) sterol reductases erg4A and erg4B to produce ergosterol. Possible alternative sterol biosynthetic pathways might exist from fecosterol to ergosterol, depending on the activities of the erg3 isoforms. The sequence is that of Delta(24(24(1)))-sterol reductase erg4A from Aspergillus fumigatus (strain ATCC MYA-4609 / CBS 101355 / FGSC A1100 / Af293) (Neosartorya fumigata).